The primary structure comprises 267 residues: 5'-nucleotidase SurE (267 aa).

A divalent metal cation-binding residues include Asp9, Asp10, Ser40, and Asn97.

The protein belongs to the SurE nucleotidase family. Requires a divalent metal cation as cofactor.

The protein resides in the cytoplasm. The catalysed reaction is a ribonucleoside 5'-phosphate + H2O = a ribonucleoside + phosphate. Functionally, nucleotidase that shows phosphatase activity on nucleoside 5'-monophosphates. The chain is 5'-nucleotidase SurE from Helicobacter pylori (strain P12).